We begin with the raw amino-acid sequence, 201 residues long: ADKAKAAEEAKKKQDDIDRKKAEVRKRLEEQSLKKQKKGFMTPERKKKLRLLLRKKAAEELKKEQERKAGERRKIIDQRCGQPKNLDGANEEQLRAIIKEYFDHTAQIESDKYDVELEIIRKDYEINELNIQVNDLRGKFIKPTLKKVSKYENKFAKLQKKAAEFNFRNQLKTVKKKEFELEDDKGATEGDGPAAEEVAAE.

Ala1 is modified (N-acetylalanine). A compositionally biased stretch (basic and acidic residues) spans 1 to 33; it reads ADKAKAAEEAKKKQDDIDRKKAEVRKRLEEQSL. Residues 1–45 form a disordered region; sequence ADKAKAAEEAKKKQDDIDRKKAEVRKRLEEQSLKKQKKGFMTPER. The troponin T-interaction stretch occupies residues 108–117; it reads IESDKYDVEL. Residues 135–148 are actin-binding; it reads DLRGKFIKPTLKKV. N6,N6,N6-trimethyllysine is present on residues Lys142 and Lys146. Positions 182–201 are disordered; that stretch reads EDDKGATEGDGPAAEEVAAE.

It belongs to the troponin I family.

In terms of biological role, troponin I is the actomyosin ATPase inhibitory subunit present in the thin filament regulatory complex. This is Troponin I from Astacus leptodactylus (Turkish narrow-clawed crayfish).